Here is a 278-residue protein sequence, read N- to C-terminus: Nucleotide-binding protein Tmel_1373 (278 aa).

10-17 (GLSGAGKS) is an ATP binding site. A GTP-binding site is contributed by 58 to 61 (DSRS).

The protein belongs to the RapZ-like family.

In terms of biological role, displays ATPase and GTPase activities. In Thermosipho melanesiensis (strain DSM 12029 / CIP 104789 / BI429), this protein is Nucleotide-binding protein Tmel_1373.